The primary structure comprises 500 residues: 2-isopropylmalate synthase (500 aa).

The Pyruvate carboxyltransferase domain occupies L5–Y266. Mn(2+) contacts are provided by D14, H202, H204, and N238. Positions K389–D500 are regulatory domain.

It belongs to the alpha-IPM synthase/homocitrate synthase family. LeuA type 1 subfamily. In terms of assembly, homodimer. The cofactor is Mn(2+).

The protein localises to the cytoplasm. It carries out the reaction 3-methyl-2-oxobutanoate + acetyl-CoA + H2O = (2S)-2-isopropylmalate + CoA + H(+). The protein operates within amino-acid biosynthesis; L-leucine biosynthesis; L-leucine from 3-methyl-2-oxobutanoate: step 1/4. Catalyzes the condensation of the acetyl group of acetyl-CoA with 3-methyl-2-oxobutanoate (2-ketoisovalerate) to form 3-carboxy-3-hydroxy-4-methylpentanoate (2-isopropylmalate). In Parabacteroides distasonis (strain ATCC 8503 / DSM 20701 / CIP 104284 / JCM 5825 / NCTC 11152), this protein is 2-isopropylmalate synthase.